A 687-amino-acid chain; its full sequence is Transketolase 2 (687 aa).

Histidine 47 contributes to the substrate binding site. Residues histidine 87 and 135–137 (GPL) each bind thiamine diphosphate. Aspartate 176 provides a ligand contact to Mg(2+). The thiamine diphosphate site is built by glycine 177 and asparagine 206. Mg(2+) is bound by residues asparagine 206 and isoleucine 208. Substrate is bound by residues histidine 282, arginine 379, and serine 406. Thiamine diphosphate is bound at residue histidine 282. The active-site Proton donor is the glutamate 432. Phenylalanine 458 lines the thiamine diphosphate pocket. Positions 482, 490, 494, and 541 each coordinate substrate.

Belongs to the transketolase family. Mg(2+) serves as cofactor. The cofactor is thiamine diphosphate.

It carries out the reaction D-sedoheptulose 7-phosphate + D-glyceraldehyde 3-phosphate = aldehydo-D-ribose 5-phosphate + D-xylulose 5-phosphate. Its activity is regulated as follows. Activity is increased sixfold following autotrophic growth on methanol compared with that of heterotrophically grown cells. Catalyzes the transfer of a two-carbon ketol group from a ketose donor to an aldose acceptor, via a covalent intermediate with the cofactor thiamine pyrophosphate. This chain is Transketolase 2, found in Xanthobacter flavus.